Reading from the N-terminus, the 212-residue chain is Eukaryotic translation initiation factor 4E-1 (212 aa).

Cysteines 125 and 129 form a disulfide.

Belongs to the eukaryotic initiation factor 4E family. As to quaternary structure, EIF4F is a multi-subunit complex, the composition of which varies with external and internal environmental conditions. It is composed of at least EIF4A, EIF4E and EIF4G. EIF4E is also known to interact with other partners, including pgl-1. Interacts with ifet-1. Enriched in the germline from L3 larvae to adults; regions of the gonad undergoing spermatogenesis. Expressed in germ granules (P granules); when associated with pgl-1.

It is found in the cytoplasm. Recognizes and binds the 7-methylguanosine-containing mRNA cap during an early step in the initiation of protein synthesis and facilitates ribosome binding by inducing the unwinding of the mRNAs secondary structures. All 5 eIF4E proteins bind monomethyl cap structures. Only ife-1, ife-2 and ife-5 bind trimethyl cap structures which result from trans-splicing. Translation of trimethyl cap structure mRNAs may be regulated by intracellular redox state; disulfide bonds change the width and depth of the cap-binding cavity determining selectivity to mRNA caps. Required for progression through meiotic divisions during spermatogenesis and for the production of viable sperm. It is not required during oogenesis. In Caenorhabditis elegans, this protein is Eukaryotic translation initiation factor 4E-1 (ife-1).